The following is a 448-amino-acid chain: ATP-dependent protease ATPase subunit HslU (448 aa).

Residues V21, 63–68, D261, E326, and R398 each bind ATP; that span reads GVGKTE.

Belongs to the ClpX chaperone family. HslU subfamily. In terms of assembly, a double ring-shaped homohexamer of HslV is capped on each side by a ring-shaped HslU homohexamer. The assembly of the HslU/HslV complex is dependent on binding of ATP.

It localises to the cytoplasm. Its function is as follows. ATPase subunit of a proteasome-like degradation complex; this subunit has chaperone activity. The binding of ATP and its subsequent hydrolysis by HslU are essential for unfolding of protein substrates subsequently hydrolyzed by HslV. HslU recognizes the N-terminal part of its protein substrates and unfolds these before they are guided to HslV for hydrolysis. The chain is ATP-dependent protease ATPase subunit HslU from Persephonella marina (strain DSM 14350 / EX-H1).